The chain runs to 606 residues: Melanoma-associated antigen D2 (606 aa).

Positions 1–204 (MSDTSESGAG…QASGTTGGRR (204 aa)) are disordered. The residue at position 2 (Ser-2) is an N-acetylserine. Phosphoserine is present on Ser-5. Residues 24–37 (SSMMQTLLTVTQNV) show a composition bias toward polar residues. Residue Thr-72 is modified to Phosphothreonine. Positions 81–93 (TQASSTTQLTDTQ) are enriched in polar residues. A compositionally biased stretch (basic and acidic residues) spans 122-131 (ETKKVSHVAD). Positions 142–164 (EAAPSQAPADEPEPESAAAQSQE) are enriched in low complexity. At Ser-157 the chain carries Phosphoserine. A compositionally biased stretch (basic residues) spans 171–181 (KVKAKKARKVK). A phosphoserine mark is found at Ser-190, Ser-191, Ser-194, Ser-197, Ser-244, and Ser-247. Over residues 248–260 (PKARRGKARRRAA) the composition is skewed to basic residues. The segment at 248–275 (PKARRGKARRRAAKLQSSQEPEAPPPRD) is disordered. Residues Ser-264 and Ser-265 each carry the phosphoserine modification. Residues 279-478 (LQGRANDLVK…KEWAAQYREA (200 aa)) enclose the MAGE domain. The disordered stretch occupies residues 534–563 (GAEAKAKAQESGSASTGASTSTNNSASASA).

In terms of assembly, interacts with GNAS. May interact with DNAJB1. As to expression, widely expressed. In the developing and adult kidney, expressed in the thick ascending limb of the loop of Henle and the distal convoluted tubules outside the loop.

Regulates the expression, localization to the plasma membrane and function of the sodium chloride cotransporters SLC12A1 and SLC12A3, two key components of salt reabsorption in the distal renal tubule. The protein is Melanoma-associated antigen D2 (MAGED2) of Homo sapiens (Human).